A 290-amino-acid polypeptide reads, in one-letter code: Protease HtpX (290 aa).

2 helical membrane passes run 6–26 (LFLV…NILF) and 36–56 (ISGL…ISLL). H143 is a Zn(2+) binding site. E144 is an active-site residue. H147 lines the Zn(2+) pocket. 2 consecutive transmembrane segments (helical) span residues 158-178 (LIQG…AGVI) and 200-220 (ITVF…VMWF). Residue E225 participates in Zn(2+) binding.

The protein belongs to the peptidase M48B family. Zn(2+) is required as a cofactor.

Its subcellular location is the cell inner membrane. This is Protease HtpX from Aeromonas hydrophila subsp. hydrophila (strain ATCC 7966 / DSM 30187 / BCRC 13018 / CCUG 14551 / JCM 1027 / KCTC 2358 / NCIMB 9240 / NCTC 8049).